The following is a 432-amino-acid chain: Trigger factor (432 aa).

The PPIase FKBP-type domain occupies 161-246; that stretch reads EDRVTIDFTG…LKKVEERELP (86 aa).

This sequence belongs to the FKBP-type PPIase family. Tig subfamily. As to quaternary structure, homodimer and monomer. In vivo most of the ribosomes are in complex with monomeric TF. Uncomplexed TF, however, is in a monomer-dimer equilibrium with approximately two thirds of TF existing in a dimeric state.

Its subcellular location is the cytoplasm. It carries out the reaction [protein]-peptidylproline (omega=180) = [protein]-peptidylproline (omega=0). Involved in protein export. Acts as a chaperone by maintaining the newly synthesized protein in an open conformation. Functions as a peptidyl-prolyl cis-trans isomerase. The polypeptide is Trigger factor (Shigella boydii serotype 4 (strain Sb227)).